A 338-amino-acid polypeptide reads, in one-letter code: DNA-directed RNA polymerase subunit alpha (338 aa).

The alpha N-terminal domain (alpha-NTD) stretch occupies residues M1–E234. The tract at residues F250 to Y338 is alpha C-terminal domain (alpha-CTD).

The protein belongs to the RNA polymerase alpha chain family. In terms of assembly, homodimer. The RNAP catalytic core consists of 2 alpha, 1 beta, 1 beta' and 1 omega subunit. When a sigma factor is associated with the core the holoenzyme is formed, which can initiate transcription.

The enzyme catalyses RNA(n) + a ribonucleoside 5'-triphosphate = RNA(n+1) + diphosphate. Functionally, DNA-dependent RNA polymerase catalyzes the transcription of DNA into RNA using the four ribonucleoside triphosphates as substrates. The polypeptide is DNA-directed RNA polymerase subunit alpha (Xanthobacter autotrophicus (strain ATCC BAA-1158 / Py2)).